A 421-amino-acid polypeptide reads, in one-letter code: UPF0415 protein C7orf25 homolog (421 aa).

The protein belongs to the UPF0415 family.

The sequence is that of UPF0415 protein C7orf25 homolog from Rattus norvegicus (Rat).